Consider the following 492-residue polypeptide: Chitooligosaccharide oxidase (492 aa).

The N-terminal stretch at 1-19 is a signal peptide; that stretch reads MHFNTLTCVLVGLVAHTSA. Residues 57–229 form the FAD-binding PCMH-type domain; the sequence is LPFEPAAIAV…VELEFQTFAA (173 aa). Residues 94–154 constitute a cross-link (6-(S-cysteinyl)-8alpha-(pros-histidyl)-FAD (His-Cys)); that stretch reads HSYTSLGFGG…GKRALAHGTC (61 aa).

Belongs to the oxygen-dependent FAD-linked oxidoreductase family. Requires FAD as cofactor. Post-translationally, the FAD cofactor is bound via a bicovalent 6-S-cysteinyl, 8alpha-N1-histidyl FAD linkage.

It localises to the secreted. The enzyme catalyses N,N'-diacetylchitobiose + O2 = N,N'-diacetylchitobiono-1,5-lactone + H2O2. It carries out the reaction N,N',N''-triacetylchitotriose + O2 = N,N',N''-triacetylchitotriono-1,5-lactone + H2O2. It catalyses the reaction N,N',N'',N'''-tetraacetylchitotetraose + O2 = N,N',N'',N'''-tetraacetylchitotetraono-1,5-lactone + H2O2. Functionally, catalyzes the selective oxidation of C1 hydroxyl moieties on chitooligosaccharides with concomitant reduction of molecular oxygen to hydrogen peroxide. This results in the formation of the corresponding lactones, which typically undergo spontaneous hydrolysis. Chitooligosaccharides are homo- or heterooligomers of N-acetylglucosamine (GlcNAc) and D-glucosamine which are linked through beta-1,4-glycosidic bonds. For optimal substrate binding at least 2 GlcNAc units are needed, and chitooligosaccharide oxidase is most efficient on chitobiose, chitotriose and chitotetraose. The chain is Chitooligosaccharide oxidase from Gibberella zeae (strain ATCC MYA-4620 / CBS 123657 / FGSC 9075 / NRRL 31084 / PH-1) (Wheat head blight fungus).